The chain runs to 276 residues: 4-hydroxy-tetrahydrodipicolinate reductase (276 aa).

16 to 21 (GALGKM) serves as a coordination point for NAD(+). K44 contacts NADP(+). NAD(+) is bound by residues 109–111 (GTT) and 135–138 (APNF). Residue H165 is the Proton donor/acceptor of the active site. Residue H166 participates in (S)-2,3,4,5-tetrahydrodipicolinate binding. The active-site Proton donor is the K169. 175 to 176 (GT) is a (S)-2,3,4,5-tetrahydrodipicolinate binding site.

It belongs to the DapB family.

Its subcellular location is the cytoplasm. It carries out the reaction (S)-2,3,4,5-tetrahydrodipicolinate + NAD(+) + H2O = (2S,4S)-4-hydroxy-2,3,4,5-tetrahydrodipicolinate + NADH + H(+). The catalysed reaction is (S)-2,3,4,5-tetrahydrodipicolinate + NADP(+) + H2O = (2S,4S)-4-hydroxy-2,3,4,5-tetrahydrodipicolinate + NADPH + H(+). It participates in amino-acid biosynthesis; L-lysine biosynthesis via DAP pathway; (S)-tetrahydrodipicolinate from L-aspartate: step 4/4. Its function is as follows. Catalyzes the conversion of 4-hydroxy-tetrahydrodipicolinate (HTPA) to tetrahydrodipicolinate. This Thermosynechococcus vestitus (strain NIES-2133 / IAM M-273 / BP-1) protein is 4-hydroxy-tetrahydrodipicolinate reductase.